Here is a 293-residue protein sequence, read N- to C-terminus: Eukaryotic translation initiation factor 3 subunit F (293 aa).

Alanine 2 carries the post-translational modification N-acetylalanine. Positions 28 to 159 (ARIHPLVIFN…IKAFVSSNLS (132 aa)) constitute an MPN domain.

The protein belongs to the eIF-3 subunit F family. Component of the eukaryotic translation initiation factor 3 (eIF-3) complex. Binds to TIF3E1 and TIF3H1. Expressed in inflorescences, leaves, stems, siliques, roots and seedlings. Accumulates at highly levels in pollen grains, developing embryos and root tips.

The protein resides in the cytoplasm. Functionally, component of the eukaryotic translation initiation factor 3 (eIF-3) complex, which is involved in protein synthesis of a specialized repertoire of mRNAs and, together with other initiation factors, stimulates binding of mRNA and methionyl-tRNAi to the 40S ribosome. The eIF-3 complex specifically targets and initiates translation of a subset of mRNAs involved in cell proliferation (Potential). Involved in cell growth and differentiation, especially during embryogenesis and male gametophyte germination. Regulates sensitivity to sugars (e.g. sucrose). The protein is Eukaryotic translation initiation factor 3 subunit F (TIF3F1) of Arabidopsis thaliana (Mouse-ear cress).